An 876-amino-acid polypeptide reads, in one-letter code: Valine--tRNA ligase (876 aa).

The 'HIGH' region motif lies at 44–54 (PNVTGKLHLGH). Residues 520-524 (KMSKS) carry the 'KMSKS' region motif. An ATP-binding site is contributed by Lys523. Residues 805 to 876 (LEGLIDMDKE…VKARIEQLKA (72 aa)) adopt a coiled-coil conformation.

This sequence belongs to the class-I aminoacyl-tRNA synthetase family. ValS type 1 subfamily. In terms of assembly, monomer.

It localises to the cytoplasm. The enzyme catalyses tRNA(Val) + L-valine + ATP = L-valyl-tRNA(Val) + AMP + diphosphate. Functionally, catalyzes the attachment of valine to tRNA(Val). As ValRS can inadvertently accommodate and process structurally similar amino acids such as threonine, to avoid such errors, it has a 'posttransfer' editing activity that hydrolyzes mischarged Thr-tRNA(Val) in a tRNA-dependent manner. The polypeptide is Valine--tRNA ligase (Staphylococcus aureus (strain Mu3 / ATCC 700698)).